Here is a 1024-residue protein sequence, read N- to C-terminus: SAC3 family protein 1 (1024 aa).

Positions 1-62 (MEKRNETGNN…QDSRQKRFSS (62 aa)) are disordered. A compositionally biased stretch (basic residues) spans 11-21 (RLKRSNNRGKS). A compositionally biased stretch (basic and acidic residues) spans 22–38 (KKDWKDASVETTPRETS). A compositionally biased stretch (acidic residues) spans 39 to 52 (VDEDNTSVFEDVEA). The PCI domain maps to 243-433 (EVEQLRKGIL…NKTAFFNDSK (191 aa)). Residue Ser-841 is modified to Phosphoserine. A coiled-coil region spans residues 945-1022 (AQLEELEVVR…ARDLLKKVET (78 aa)).

This sequence belongs to the SAC3 family.

The protein localises to the cytoplasm. It is found in the nucleus envelope. The polypeptide is SAC3 family protein 1 (Schizosaccharomyces pombe (strain 972 / ATCC 24843) (Fission yeast)).